The following is a 308-amino-acid chain: Uricase (308 aa).

Active-site charge relay system residues include Lys5 and Thr65. Urate contacts are provided by Thr65, Asp66, Phe177, Arg194, Ile242, Gln243, and Asn269. The interval 283–308 is disordered; the sequence is ASVLREPPAPTGFQQFSMDRGDLDEQ.

This sequence belongs to the uricase family.

It carries out the reaction urate + O2 + H2O = 5-hydroxyisourate + H2O2. The protein operates within purine metabolism; urate degradation; (S)-allantoin from urate: step 1/3. Catalyzes the oxidation of uric acid to 5-hydroxyisourate, which is further processed to form (S)-allantoin. This chain is Uricase, found in Haloferax volcanii (strain ATCC 29605 / DSM 3757 / JCM 8879 / NBRC 14742 / NCIMB 2012 / VKM B-1768 / DS2) (Halobacterium volcanii).